Consider the following 164-residue polypeptide: uncharacterized protein (164 aa).

This is an uncharacterized protein from Rickettsia bellii (strain RML369-C).